The primary structure comprises 378 residues: Succinate--CoA ligase [GDP-forming] subunit beta (378 aa).

An ATP-grasp domain is found at 9 to 235 (KEILARYGVP…VEAEHPLEVE (227 aa)). Residues Lys-45, 52-54 (GRG), Val-94, and Glu-99 contribute to the GTP site. Residues Asn-190 and Asp-204 each coordinate Mg(2+). Residues Asn-255 and 312–314 (GIT) each bind substrate.

This sequence belongs to the succinate/malate CoA ligase beta subunit family. Heterotetramer of two alpha and two beta subunits. Requires Mg(2+) as cofactor.

It carries out the reaction GTP + succinate + CoA = succinyl-CoA + GDP + phosphate. The catalysed reaction is succinate + ATP + CoA = succinyl-CoA + ADP + phosphate. It participates in carbohydrate metabolism; tricarboxylic acid cycle; succinate from succinyl-CoA (ligase route): step 1/1. Functionally, succinyl-CoA synthetase functions in the citric acid cycle (TCA), coupling the hydrolysis of succinyl-CoA to the synthesis of either ATP or GTP and thus represents the only step of substrate-level phosphorylation in the TCA. The beta subunit provides nucleotide specificity of the enzyme and binds the substrate succinate, while the binding sites for coenzyme A and phosphate are found in the alpha subunit. Can use either ATP or GTP, but prefers GTP. This chain is Succinate--CoA ligase [GDP-forming] subunit beta, found in Thermus thermophilus.